The chain runs to 591 residues: Transcription factor COE1 (591 aa).

At Met1 the chain carries N-acetylmethionine. Over residues 1-14 the composition is skewed to polar residues; the sequence is MFGIQESIQRSGSS. The segment at 1–21 is disordered; sequence MFGIQESIQRSGSSMKEEPLG. Lys16 is covalently cross-linked (Glycyl lysine isopeptide (Lys-Gly) (interchain with G-Cter in SUMO1); alternate). A Glycyl lysine isopeptide (Lys-Gly) (interchain with G-Cter in SUMO2); alternate cross-link involves residue Lys16. The tract at residues 63–66 is interaction with DNA; that stretch reads RKSN. The C5-type zinc-finger motif lies at 151-170; that stretch reads CRVLLTHEIMCSRCCDKKSC. 2 interaction with DNA regions span residues 197–204 and 236–239; these read NCLKNAGN and NNSK. The IPT/TIG domain occupies 262–345; that stretch reads PCIKAISPSE…KGTPGRFIYT (84 aa). Residues 457 to 480 are disordered; it reads GFTRNSSSVSPHGYVPSTTPQQTN.

The protein belongs to the COE family. In terms of assembly, homodimer. Interacts with ZNF423 and ZNF521, leading to prevent EBF1 to bind DNA and activate target genes. Interacts with CCR4-NOT component CNOT3. (Microbial infection) Interacts with Epstein-barr virus protein EBNA2.

It is found in the nucleus. Functionally, key pioneer transcription factor of B-cell specification and commitment. Recognizes variations of the palindromic sequence 5'-ATTCCCNNGGGAATT-3'. Operates in a transcription factor network to activate B-cell-specific genes and repress genes associated with alternative cell fates. For instance, positively regulates many B-cell specific genes including BCR or CD40 while repressing genes that direct cells into alternative lineages, including GATA3 and TCF7 for the T-cell lineage. In addition to its role during lymphopoiesis, controls the thermogenic gene program in adipocytes during development and in response to environmental cold. Its function is as follows. (Microbial infection) Acts as a chromatin anchor for Epstein-Barr virus EBNA2 to mediate the assembly of EBNA2 chromatin complexes in B-cells. In addition, binds to the viral LMP1 proximal promoter and promotes its expression during latency. This is Transcription factor COE1 (EBF1) from Homo sapiens (Human).